The following is a 757-amino-acid chain: Protein ALTERED SEED GERMINATION 2 (757 aa).

WD repeat units lie at residues F6 to E43, G48 to S87, G91 to E132, C145 to P185, K213 to S253, and R277 to G316. Residues R245–R257 carry the Nuclear localization signal motif. The TPR repeat unit spans residues F442–D475. The tract at residues A519–Y601 is disordered. The segment covering S523–R532 has biased composition (basic and acidic residues). Acidic residues predominate over residues E533–L543. Residues T582–Y601 show a composition bias toward polar residues. WD repeat units follow at residues N618–V658 and G661–V700. A lipid anchor (S-12-hydroxyfarnesyl cysteine; by FTB/ERA1) is attached at C754.

In terms of assembly, interacts with DDB1; the subcellular localization of this complex depends on farnesylation status. Binds to HDA9 in the cytosol when farnesylated. In terms of processing, farnesylated at Cys-754 by FTB/ERA1; this modification triggers an exclusion from the nucleus.

Its subcellular location is the nucleus. It is found in the cytoplasm. The protein resides in the cytosol. It participates in protein modification; protein ubiquitination. In terms of biological role, may function as a substrate adapter for CUL4-DDB1 E3 ubiquitin-protein ligase complex. Negative regulator of fatty acid biosynthetic process and accumulation. Acts as an abscisic acid (ABA) negative regulator. Involved in responses to salt (NaCl) and osmotic (e.g. in response to mannitol and PEG) stresses. The chain is Protein ALTERED SEED GERMINATION 2 from Arabidopsis thaliana (Mouse-ear cress).